Consider the following 94-residue polypeptide: uncharacterized protein (94 aa).

This is an uncharacterized protein from Bacillus subtilis (strain 168).